The following is a 96-amino-acid chain: Putative septation protein SpoVG (96 aa).

This sequence belongs to the SpoVG family.

Could be involved in septation. This chain is Putative septation protein SpoVG, found in Clostridium kluyveri (strain ATCC 8527 / DSM 555 / NBRC 12016 / NCIMB 10680 / K1).